The primary structure comprises 240 residues: REF/SRPP-like protein At1g67360 (240 aa).

A disordered region spans residues 208-240 (KEDARRKKGGDTAGKKGETTDAADGDKSSSDSE).

It belongs to the REF/SRPP family.

The chain is REF/SRPP-like protein At1g67360 from Arabidopsis thaliana (Mouse-ear cress).